The following is a 92-amino-acid chain: MWPVLWTVVRTYAPYVTFPVAFVVGAVGYHLEWFIRGKDPQPAEEEKSISERREDRKLDELLGKDHTQVVSLKDKLEFAPKAVLNRNRPEKN.

A helical transmembrane segment spans residues 15–34 (YVTFPVAFVVGAVGYHLEWF).

Belongs to the SMIM12 family.

The protein localises to the membrane. The polypeptide is Small integral membrane protein 12 (SMIM12) (Canis lupus familiaris (Dog)).